The following is a 258-amino-acid chain: UPF0246 protein CGSHiEE_07045 (258 aa).

This sequence belongs to the UPF0246 family.

The polypeptide is UPF0246 protein CGSHiEE_07045 (Haemophilus influenzae (strain PittEE)).